The chain runs to 317 residues: MKNLNIIFAGTPDFAAQHLQALLASNHNVIAVYTQPDKPAGRGKKLQASPVKQLAQQHNLPVYQPKSLRNEEAQSELAALNADVMVVVAYGLILPKAVLEAPRLGCLNVHGSILPRWRGAAPIQRAIWAGDKQTGVTVMQMNEGLDTGDMLHKVYCEITPQETSATLYQKLAQLAPSALIEVLDHLEDGSFQPQVQDDSQSCYADKLTKEEAKLDWTLPAAQLERNIRAFNPAPTAFLTLNLNGNEERIKIYQADVLPHQEKAAGTVLACDKKGVQIATADGVLNITRLQPSGKKPMSVQDFLNGRADWFQAGNVLS.

112-115 (SILP) is a (6S)-5,6,7,8-tetrahydrofolate binding site.

The protein belongs to the Fmt family.

It catalyses the reaction L-methionyl-tRNA(fMet) + (6R)-10-formyltetrahydrofolate = N-formyl-L-methionyl-tRNA(fMet) + (6S)-5,6,7,8-tetrahydrofolate + H(+). Functionally, attaches a formyl group to the free amino group of methionyl-tRNA(fMet). The formyl group appears to play a dual role in the initiator identity of N-formylmethionyl-tRNA by promoting its recognition by IF2 and preventing the misappropriation of this tRNA by the elongation apparatus. This Actinobacillus succinogenes (strain ATCC 55618 / DSM 22257 / CCUG 43843 / 130Z) protein is Methionyl-tRNA formyltransferase.